The primary structure comprises 478 residues: UDP-N-acetylmuramate--L-alanine ligase (478 aa).

112–118 is a binding site for ATP; sequence GTHGKTT.

The protein belongs to the MurCDEF family.

The protein localises to the cytoplasm. It carries out the reaction UDP-N-acetyl-alpha-D-muramate + L-alanine + ATP = UDP-N-acetyl-alpha-D-muramoyl-L-alanine + ADP + phosphate + H(+). The protein operates within cell wall biogenesis; peptidoglycan biosynthesis. Functionally, cell wall formation. The protein is UDP-N-acetylmuramate--L-alanine ligase of Polynucleobacter asymbioticus (strain DSM 18221 / CIP 109841 / QLW-P1DMWA-1) (Polynucleobacter necessarius subsp. asymbioticus).